The following is a 331-amino-acid chain: Quinone oxidoreductase (331 aa).

Residue A2 is modified to N-acetylalanine. K23 carries the post-translational modification N6-acetyllysine. Phosphoserine is present on S35. NADP(+)-binding positions include Y53, 158 to 161, and G181; that span reads SGGV. K186 carries the N6-acetyllysine modification. NADP(+)-binding positions include H200, N231, 248–251, and 271–273; these read VGCR and VSL. K298 carries the post-translational modification N6-succinyllysine.

This sequence belongs to the zinc-containing alcohol dehydrogenase family. Quinone oxidoreductase subfamily. In terms of assembly, homotetramer.

The protein localises to the cytoplasm. The catalysed reaction is 2 a quinone + NADPH + H(+) = 2 a 1,4-benzosemiquinone + NADP(+). In terms of biological role, does not have alcohol dehydrogenase activity. Binds NADP and acts through a one-electron transfer process. Orthoquinones, such as 1,2-naphthoquinone or 9,10-phenanthrenequinone, are the best substrates (in vitro). May act in the detoxification of xenobiotics. Interacts with (AU)-rich elements (ARE) in the 3'-UTR of target mRNA species and enhances their stability. NADPH binding interferes with mRNA binding. The polypeptide is Quinone oxidoreductase (Cryz) (Mus musculus (Mouse)).